The following is a 504-amino-acid chain: Protein phosphatase 1J (504 aa).

Disordered stretches follow at residues 1–102 and 194–217; these read MLNR…RLPW and PLCL…SPQS. Positions 14 to 23 are enriched in low complexity; sequence SSSGTSSQRS. Position 41 is a phosphothreonine (threonine 41). Polar residues predominate over residues 59 to 73; the sequence is TAETPVSFSRPTFLQ. Serine 65 and serine 75 each carry phosphoserine. Positions 103–496 constitute a PPM-type phosphatase domain; that stretch reads STGYAEVINA…DDISVFVIPL (394 aa). Over residues 197–217 the composition is skewed to low complexity; sequence LPSTPGTPGVSSPSQLVSPQS.

This sequence belongs to the PP2C family. Interacts with UBE2I/UBC9.

It carries out the reaction O-phospho-L-seryl-[protein] + H2O = L-seryl-[protein] + phosphate. It catalyses the reaction O-phospho-L-threonyl-[protein] + H2O = L-threonyl-[protein] + phosphate. The protein is Protein phosphatase 1J (Ppm1j) of Rattus norvegicus (Rat).